The sequence spans 176 residues: NAD(P)H-quinone oxidoreductase subunit 6, chloroplastic (176 aa).

A run of 5 helical transmembrane segments spans residues 10–30 (FLLV…VLLP), 32–52 (PIYS…FYIL), 61–81 (AQLL…VMFM), 92–112 (LWTV…ISLI), and 152–172 (FFLP…GAIA).

This sequence belongs to the complex I subunit 6 family. As to quaternary structure, NDH is composed of at least 16 different subunits, 5 of which are encoded in the nucleus.

The protein resides in the plastid. It is found in the chloroplast thylakoid membrane. The enzyme catalyses a plastoquinone + NADH + (n+1) H(+)(in) = a plastoquinol + NAD(+) + n H(+)(out). It carries out the reaction a plastoquinone + NADPH + (n+1) H(+)(in) = a plastoquinol + NADP(+) + n H(+)(out). Functionally, NDH shuttles electrons from NAD(P)H:plastoquinone, via FMN and iron-sulfur (Fe-S) centers, to quinones in the photosynthetic chain and possibly in a chloroplast respiratory chain. The immediate electron acceptor for the enzyme in this species is believed to be plastoquinone. Couples the redox reaction to proton translocation, and thus conserves the redox energy in a proton gradient. This is NAD(P)H-quinone oxidoreductase subunit 6, chloroplastic (ndhG) from Solanum bulbocastanum (Wild potato).